A 36-amino-acid chain; its full sequence is Glucagon-2 (36 aa).

The protein belongs to the glucagon family.

It is found in the secreted. In terms of biological role, glucagon plays a key role in glucose metabolism and homeostasis. Regulates blood glucose by increasing gluconeogenesis and decreasing glycolysis. In Huso dauricus (Kaluga sturgeon), this protein is Glucagon-2.